Reading from the N-terminus, the 303-residue chain is Protoheme IX farnesyltransferase (303 aa).

The next 8 helical transmembrane spans lie at 25-45 (MGLV…AIVL), 54-74 (IPQI…ACAL), 104-124 (LLIL…ILNI), 125-145 (PSGV…SIWS), 151-171 (WNTV…WTAI), 179-199 (AIAL…ALAI), 228-248 (VWLI…PVFI), and 280-300 (FVYS…ISLI).

This sequence belongs to the UbiA prenyltransferase family. Protoheme IX farnesyltransferase subfamily. As to quaternary structure, interacts with CtaA.

The protein localises to the cell membrane. It carries out the reaction heme b + (2E,6E)-farnesyl diphosphate + H2O = Fe(II)-heme o + diphosphate. The protein operates within porphyrin-containing compound metabolism; heme O biosynthesis; heme O from protoheme: step 1/1. In terms of biological role, converts heme B (protoheme IX) to heme O by substitution of the vinyl group on carbon 2 of heme B porphyrin ring with a hydroxyethyl farnesyl side group. The polypeptide is Protoheme IX farnesyltransferase (Staphylococcus carnosus (strain TM300)).